The primary structure comprises 539 residues: Cytochrome c oxidase subunit 1 homolog (539 aa).

The next 2 helical transmembrane spans lie at 28–48 (LFAA…LLLL) and 75–95 (GVMA…VVAL). H117 contacts heme b. 11 helical membrane-spanning segments follow: residues 118-138 (TSAV…FYVV), 154-174 (FVFW…LLGI), 187-207 (VDLW…GTIL), 214-234 (ISVA…LHIV), 265-285 (GHNA…YYFI), 298-318 (LSII…PHHL), 330-350 (LGMV…INGL), 368-388 (MMVM…MMSI), 402-422 (IGHV…GAIY), 443-463 (HFWL…VAGI), and 498-518 (LGGL…TMTI). Cu cation is bound by residues H266, H316, and H317. Residues H404 and H406 each coordinate heme b.

Belongs to the heme-copper respiratory oxidase family. The cofactor is Cu(2+). Requires heme b as cofactor.

It is found in the cell membrane. It carries out the reaction 4 Fe(II)-[cytochrome c] + O2 + 8 H(+)(in) = 4 Fe(III)-[cytochrome c] + 2 H2O + 4 H(+)(out). The protein operates within energy metabolism; oxidative phosphorylation. In terms of biological role, cytochrome c oxidase is the component of the respiratory chain that catalyzes the reduction of oxygen to water. Subunits 1-3 form the functional core of the enzyme complex. Co I is the catalytic subunit of the enzyme. Electrons originating in cytochrome c or a quinol are transferred to the bimetallic center formed by a high-spin heme and copper B. The sequence is that of Cytochrome c oxidase subunit 1 homolog (fixN) from Agrobacterium tumefaciens (strain T37).